The sequence spans 384 residues: UDP-N-acetylglucosamine--N-acetylmuramyl-(pentapeptide) pyrophosphoryl-undecaprenol N-acetylglucosamine transferase (384 aa).

UDP-N-acetyl-alpha-D-glucosamine is bound by residues 22 to 24, Arg179, Ser209, and Gln312; that span reads TGG.

Belongs to the glycosyltransferase 28 family. MurG subfamily.

It is found in the cell inner membrane. The catalysed reaction is di-trans,octa-cis-undecaprenyl diphospho-N-acetyl-alpha-D-muramoyl-L-alanyl-D-glutamyl-meso-2,6-diaminopimeloyl-D-alanyl-D-alanine + UDP-N-acetyl-alpha-D-glucosamine = di-trans,octa-cis-undecaprenyl diphospho-[N-acetyl-alpha-D-glucosaminyl-(1-&gt;4)]-N-acetyl-alpha-D-muramoyl-L-alanyl-D-glutamyl-meso-2,6-diaminopimeloyl-D-alanyl-D-alanine + UDP + H(+). The protein operates within cell wall biogenesis; peptidoglycan biosynthesis. In terms of biological role, cell wall formation. Catalyzes the transfer of a GlcNAc subunit on undecaprenyl-pyrophosphoryl-MurNAc-pentapeptide (lipid intermediate I) to form undecaprenyl-pyrophosphoryl-MurNAc-(pentapeptide)GlcNAc (lipid intermediate II). This chain is UDP-N-acetylglucosamine--N-acetylmuramyl-(pentapeptide) pyrophosphoryl-undecaprenol N-acetylglucosamine transferase, found in Treponema pallidum (strain Nichols).